We begin with the raw amino-acid sequence, 270 residues long: Splicing factor YJU2 (270 aa).

The segment at 1–32 (MSERKVLNKYIPPDYDPSIRPPKKKKKFQGPN) is disordered. Residues cysteine 48, cysteine 51, cysteine 84, and cysteine 87 each contribute to the Zn(2+) site. Residues 251-270 (PNFQPPKYAKRKMEKKKVLV) are disordered. Basic residues predominate over residues 258–270 (YAKRKMEKKKVLV).

Belongs to the CWC16 family. YJU2 subfamily. Component of the spliceosome. Present in the activated B complex, the catalytically activated B* complex which catalyzes the branching, the catalytic step 1 C complex catalyzing the exon ligation, and the postcatalytic P complex containing the ligated exons (mRNA) and the excised lariat intron. Belongs to the 40S cdc5-associated complex (or cwf complex), a spliceosome sub-complex reminiscent of a late-stage spliceosome composed of the U2, U5 and U6 snRNAs and at least brr2, cdc5, cwf2/prp3, cwf3/syf1, cwf4/syf3, cwf5/ecm2, spp42/cwf6, cwf7/spf27, cwf8, cwf9, cwf10, cwf11, cwf12, prp45/cwf13, cwf14, cwf15, cwf16, cwf17, cwf18, cwf19, cwf20, cwf21, cwf22, cwf23, cwf24, cwf25, cwf26, cyp7/cwf27, cwf28, cwf29/ist3, lea1, msl1, prp5/cwf1, prp10, prp12/sap130, prp17, prp22, sap61, sap62, sap114, sap145, slu7, smb1, smd1, smd3, smf1, smg1 and syf2.

The protein resides in the nucleus. Part of the spliceosome which catalyzes two sequential transesterification reactions, first the excision of the non-coding intron from pre-mRNA and then the ligation of the coding exons to form the mature mRNA. Plays a role in stabilizing the structure of the spliceosome catalytic core and docking of the branch helix into the active site, producing 5'-exon and lariat intron-3'-intermediates. This Schizosaccharomyces pombe (strain 972 / ATCC 24843) (Fission yeast) protein is Splicing factor YJU2 (cwf16).